The sequence spans 1026 residues: Translation initiation factor IF-2, chloroplastic (1026 aa).

The transit peptide at 1–63 (MPSMLVLVGT…KKWLCRYSVS (63 aa)) directs the protein to the chloroplast. Residues 158–173 (AEKLEIPKPGNKEGGE) show a composition bias toward basic and acidic residues. Disordered regions lie at residues 158–208 (AEKL…TMKS), 230–284 (FNRG…PPVK), and 300–393 (VSEE…KWSK). Over residues 178 to 194 (SQPSANSSNSRNGSYAN) the composition is skewed to polar residues. Over residues 254-269 (LAPPQPPFRPQPPVRP) the composition is skewed to pro residues. Residues 306–317 (SSVKSKERKPIL) are compositionally biased toward basic and acidic residues. A compositionally biased stretch (basic residues) spans 384-393 (SGRKGRKWSK). The tr-type G domain maps to 499-672 (DRPPVITIMG…MLVAELQELK (174 aa)). The interval 508–515 (GHVDHGKT) is G1. 508–515 (GHVDHGKT) is a GTP binding site. Residues 533–537 (GITQG) form a G2 region. The tract at residues 558-561 (DTPG) is G3. GTP contacts are provided by residues 558–562 (DTPGH) and 612–615 (NKID). Positions 612–615 (NKID) are G4. Residues 648-650 (SAL) form a G5 region.

This sequence belongs to the TRAFAC class translation factor GTPase superfamily. Classic translation factor GTPase family. IF-2 subfamily.

Its subcellular location is the plastid. The protein localises to the chloroplast. In terms of biological role, one of the essential components for the initiation of protein synthesis. Protects formylmethionyl-tRNA from spontaneous hydrolysis and promotes its binding to the 30S ribosomal subunits. Also involved in the hydrolysis of GTP during the formation of the 70S ribosomal complex. In Arabidopsis thaliana (Mouse-ear cress), this protein is Translation initiation factor IF-2, chloroplastic.